Here is a 64-residue protein sequence, read N- to C-terminus: Large ribosomal subunit protein bL35 (64 aa).

The span at 1-42 (MPKAKTHSGASKRFRRTGTGKIVRQKANRRHLLEHKSSKRTR) shows a compositional bias: basic residues. The tract at residues 1-64 (MPKAKTHSGA…TKRVKSLLNG (64 aa)) is disordered.

It belongs to the bacterial ribosomal protein bL35 family.

The protein is Large ribosomal subunit protein bL35 of Mycobacterium ulcerans (strain Agy99).